The sequence spans 295 residues: Protein FAM110A (295 aa).

Disordered stretches follow at residues 117–148 (PVSP…PPSI) and 160–191 (PASP…KSDL). 2 stretches are compositionally biased toward pro residues: residues 138-147 (LATPPRPPPS) and 160-171 (PASPIQPCPSPG).

It belongs to the FAM110 family. As to quaternary structure, may interact with CSPP1.

It localises to the cytoplasm. The protein localises to the cytoskeleton. It is found in the microtubule organizing center. The protein resides in the centrosome. Its subcellular location is the spindle pole. The protein is Protein FAM110A (FAM110A) of Bos taurus (Bovine).